Here is a 421-residue protein sequence, read N- to C-terminus: Phosphoribosylamine--glycine ligase (421 aa).

The ATP-grasp domain maps to 108–314; sequence KEIMVKYNVP…FAQNIDDIMM (207 aa). 134–195 lines the ATP pocket; the sequence is IEEQGAPIVV…EEFLDGEEFS (62 aa). Residues E284 and N286 each contribute to the Mg(2+) site.

This sequence belongs to the GARS family. It depends on Mg(2+) as a cofactor. Mn(2+) serves as cofactor.

The enzyme catalyses 5-phospho-beta-D-ribosylamine + glycine + ATP = N(1)-(5-phospho-beta-D-ribosyl)glycinamide + ADP + phosphate + H(+). It participates in purine metabolism; IMP biosynthesis via de novo pathway; N(1)-(5-phospho-D-ribosyl)glycinamide from 5-phospho-alpha-D-ribose 1-diphosphate: step 2/2. The chain is Phosphoribosylamine--glycine ligase from Streptococcus pyogenes serotype M18 (strain MGAS8232).